The chain runs to 75 residues: U6-lycotoxin-Ls1h (75 aa).

A signal peptide spans 1 to 21 (MKLLLFTALVLVVISLIEVEA). Positions 22 to 25 (ENER) are excised as a propeptide.

Belongs to the neurotoxin 19 (CSTX) family. 06 (U6-Lctx) subfamily. Contains 4 disulfide bonds. As to expression, expressed by the venom gland.

The protein resides in the secreted. This is U6-lycotoxin-Ls1h from Lycosa singoriensis (Wolf spider).